A 184-amino-acid polypeptide reads, in one-letter code: Photosystem I assembly protein Ycf4 (184 aa).

2 helical membrane passes run Leu-22–Ser-42 and Ile-64–Ile-84.

It belongs to the Ycf4 family.

It is found in the plastid. It localises to the chloroplast thylakoid membrane. Its function is as follows. Seems to be required for the assembly of the photosystem I complex. The chain is Photosystem I assembly protein Ycf4 from Angiopteris evecta (Mule's foot fern).